The sequence spans 194 residues: High mobility group protein B4 (194 aa).

2 consecutive DNA-binding regions (HMG box) follow at residues 9 to 79 (PKAN…MNYF) and 93 to 161 (PRRP…SVYR).

This sequence belongs to the HMGB family.

It localises to the nucleus. Its subcellular location is the chromosome. This Bos taurus (Bovine) protein is High mobility group protein B4 (HMGB4).